Consider the following 1131-residue polypeptide: MATTSTSNMSRNGGFCGALQRAPPPMPPTLIRRLSSRECYGVGKVKVMLRVADRDRNSGGTEPDFMALDKKKRQVTLTDPRTACPPPQAAQERAPMVAAPKMFAFDNLFTGEDKQSDVCASALSEVIPAVLEGSDGCLLAMGYPATGQAQTVLGELGGGSGSGSASGSGVACSLGAAPCAIAWLYKGIQERRQKSGARFSVRVSAVGVSATKPDALSQDLLISHAAESDDSPGIYLRDDFLGGPTELRAPTAERAALFLDSALAGRLKSSGSTASGSSGCAAPLESALIFTLHVYQYSLSRKGGVAGGRSRLHIIDLGGCANRNGGLPLSGIGNILLAILSGQRHPPHKDHPLTPLLKDCLAPITCHVAIVAHVRPEQSYQDALSTIQIASRIHRLRRRKHRVPMPLAVGLAQGLGGNGSSAGSGADPSSSEISADTVIYMGPNDDATDGEHPPVYLPSLTAGDNRGVMSKALKGSGLEKPPSKSASNSPMMMKKAMAAEKAKKLPGSHTGSLKRQAGAGACSSPMIPHEQPQIQAMGSPIPIPRHMVSKGSMVPSPKGSPMRRAHPGAALEQLEAGMRKITEEQWIDGPRVSRAKVAEARHLMREVNHVKQCETWVDGPKSQSCRSLTACNLPAAGGSQTQGYGFMDAHKKTMIRQWVENQTTQVFQSTVSASNSPTALHWKLSQLKQKSLDLPDRPAFNPEPSLDLNQPCFESLPLLDPAPPDGDEDEDSGPSEVPPALPLLDDPLGSRDISQDNLHRMLSRHVSREQLHEAELVASRASSSHHPSQRSIDCGLQVTEEEIARTMSRDRDHDPSAHPLSALSHCDNISFVSSFNMACESFSECGERARQQFDQLARLHEIFTSQLAMAEVTPSAALFRTDIGSVFSEPVYHFNVGQSSVCSEPAYRLTPSPPKQPSHSPSQGSLPSLNGIMEIAGMDDYALLRQPDGASDPNLQKGEKRFTPQHDDICELDEKSMAAAVGKGNSLEDAQHKLNEITNILPLAAQSRLPLLPLNTSSEAYDSGHDSNSTPRTSKHSGISRRAESGYHSVATVRDSDESSFASGMSKGQRHRITVSGTGAVTSAGIGNYQRQCHKKRHRQDQAGNNKGLCNWLLTPFSCTYPETEGEISDF.

Positions 1–11 (MATTSTSNMSR) are enriched in polar residues. The segment at 1–25 (MATTSTSNMSRNGGFCGALQRAPPP) is disordered. The 353-residue stretch at 44-396 (KVKVMLRVAD…IQIASRIHRL (353 aa)) folds into the Kinesin motor domain. Disordered regions lie at residues 472-494 (ALKGSGLEKPPSKSASNSPMMMK), 693-753 (DLPD…SRDI), 905-926 (PAYRLTPSPPKQPSHSPSQGSL), and 1016-1072 (TSSE…QRHR). Positions 483–494 (SKSASNSPMMMK) are enriched in low complexity. A compositionally biased stretch (polar residues) spans 1016–1032 (TSSEAYDSGHDSNSTPR).

Belongs to the TRAFAC class myosin-kinesin ATPase superfamily. Kinesin family. KIF26 subfamily.

It localises to the cytoplasm. Its subcellular location is the cytoskeleton. The protein is Kinesin-like protein CG14535 of Drosophila melanogaster (Fruit fly).